The sequence spans 261 residues: MTTRLLQGKKGLITGIANNMSISWAIAQLAKKHGAELWFTYQSEALEKRVKPLAEEIGCNFISELDVTDQKSISNLFNDIKEKWNSFDFLLHGMAFANKNELKGRYVDTSLENFYNSLHISCYSLLELSRSAETLMHDGGSILTLTYYGAEKVIPNYNIMGVAKAALEASVKYLANDMGENNIRVNAISAGPIKTLASSAISDFSTMLKFHASTAPLKRNITQEDVGGAAVYLFSELSKGVTGEIHYVDCGYNIIGSSKLL.

NAD(+)-binding positions include Gly-15, Ser-21 to Ile-22, Gln-42, Asp-66 to Val-67, and Met-94. Position 97 (Ala-97) interacts with substrate. Catalysis depends on proton acceptor residues Tyr-147 and Tyr-157. NAD(+) contacts are provided by residues Lys-164 and Ile-193–Ala-197.

The protein belongs to the short-chain dehydrogenases/reductases (SDR) family. FabI subfamily. In terms of assembly, homotetramer.

It carries out the reaction a 2,3-saturated acyl-[ACP] + NAD(+) = a (2E)-enoyl-[ACP] + NADH + H(+). It functions in the pathway lipid metabolism; fatty acid biosynthesis. Its function is as follows. Catalyzes the reduction of a carbon-carbon double bond in an enoyl moiety that is covalently linked to an acyl carrier protein (ACP). Involved in the elongation cycle of fatty acid which are used in the lipid metabolism. This is Enoyl-[acyl-carrier-protein] reductase [NADH] FabI (fabI) from Rickettsia typhi (strain ATCC VR-144 / Wilmington).